Here is a 266-residue protein sequence, read N- to C-terminus: Cysteine-rich repeat secretory protein 41 (266 aa).

An N-terminal signal peptide occupies residues M1–S26. Gnk2-homologous domains lie at Y33–S136 and Y142–F253.

Belongs to the cysteine-rich repeat secretory protein family.

It is found in the secreted. The chain is Cysteine-rich repeat secretory protein 41 (CRRSP41) from Arabidopsis thaliana (Mouse-ear cress).